Consider the following 122-residue polypeptide: MGKINIKKGDLVQVITGAKAERGGDRGKQGKVLRVFTESNRVLVEGINRVTKHTKVGQSQRGSKTGGIEIVEAPIHISNVALVDPSTKKTTRVGYRLETVERDGRERVTRVRFAKSSGKDLA.

Belongs to the universal ribosomal protein uL24 family. As to quaternary structure, part of the 50S ribosomal subunit.

In terms of biological role, one of two assembly initiator proteins, it binds directly to the 5'-end of the 23S rRNA, where it nucleates assembly of the 50S subunit. One of the proteins that surrounds the polypeptide exit tunnel on the outside of the subunit. The sequence is that of Large ribosomal subunit protein uL24 from Renibacterium salmoninarum (strain ATCC 33209 / DSM 20767 / JCM 11484 / NBRC 15589 / NCIMB 2235).